Here is a 120-residue protein sequence, read N- to C-terminus: Large ribosomal subunit protein P3y (120 aa).

Residues glycine 81–glutamate 92 show a composition bias toward gly residues. The tract at residues glycine 81–glycine 120 is disordered. Residues threonine 97–glutamate 106 are compositionally biased toward basic and acidic residues.

The protein belongs to the eukaryotic ribosomal protein P1/P2 family.

Functionally, plays an important role in the elongation step of protein synthesis. The chain is Large ribosomal subunit protein P3y (RPP3B) from Arabidopsis thaliana (Mouse-ear cress).